A 295-amino-acid polypeptide reads, in one-letter code: Small ribosomal subunit protein uS2 (295 aa).

It belongs to the universal ribosomal protein uS2 family.

The protein is Small ribosomal subunit protein uS2 of Rickettsia canadensis (strain McKiel).